Reading from the N-terminus, the 378-residue chain is MISFSSITDSPKLNLDDVSDWYITNTIIKDPPKGITTRRIIKVGEDNDLLNAEDDSTDRNDAILQFARNVNPMVSVQYNNTGLGFGRSSNEAFLPYRIIKDGAFRPPIVDLRDLMPLSRQPRNTTSINTSAEFIDFSKGIKPSENALKRNEVLNTLKTIPMCSNKGYNFKTGIDQPYDVVYHIEDKPQRIKQALYEYTEDNIGRNVIDGVTQNIYEGFVSPETNKTFSTFRDETSGMVEGFSGRIPISKNDSNWQQHPHMQFKNLQNVTIATNANGNVTKDNISRVEKDRERNLPLYSVKTHKIYKGLHVNYLNGQEDRTCTTGMINPKKQRQTYSYGNNGQGGGGGNKPITIKIREQNNLGYGFNAIRDNEGVKINY.

The protein belongs to the IIV-6 329R family.

This is an uncharacterized protein from Acheta domesticus (House cricket).